The following is a 174-amino-acid chain: Crossover junction endodeoxyribonuclease RuvC (174 aa).

Catalysis depends on residues aspartate 8, glutamate 69, and aspartate 141. Mg(2+) contacts are provided by aspartate 8, glutamate 69, and aspartate 141.

Belongs to the RuvC family. In terms of assembly, homodimer which binds Holliday junction (HJ) DNA. The HJ becomes 2-fold symmetrical on binding to RuvC with unstacked arms; it has a different conformation from HJ DNA in complex with RuvA. In the full resolvosome a probable DNA-RuvA(4)-RuvB(12)-RuvC(2) complex forms which resolves the HJ. Mg(2+) is required as a cofactor.

The protein resides in the cytoplasm. It carries out the reaction Endonucleolytic cleavage at a junction such as a reciprocal single-stranded crossover between two homologous DNA duplexes (Holliday junction).. Functionally, the RuvA-RuvB-RuvC complex processes Holliday junction (HJ) DNA during genetic recombination and DNA repair. Endonuclease that resolves HJ intermediates. Cleaves cruciform DNA by making single-stranded nicks across the HJ at symmetrical positions within the homologous arms, yielding a 5'-phosphate and a 3'-hydroxyl group; requires a central core of homology in the junction. The consensus cleavage sequence is 5'-(A/T)TT(C/G)-3'. Cleavage occurs on the 3'-side of the TT dinucleotide at the point of strand exchange. HJ branch migration catalyzed by RuvA-RuvB allows RuvC to scan DNA until it finds its consensus sequence, where it cleaves and resolves the cruciform DNA. The sequence is that of Crossover junction endodeoxyribonuclease RuvC from Xanthomonas campestris pv. campestris (strain 8004).